Consider the following 885-residue polypeptide: Rho GTPase-activating protein gacFF (885 aa).

A compositionally biased stretch (low complexity) spans 168-182 (TTTNNSNNSNSNNNN). Residues 168–187 (TTTNNSNNSNSNNNNKQYNS) form a disordered region. The stretch at 222–249 (LINKIQNDSEQLKLVLSQVEQQIEFLKS) forms a coiled coil. The region spanning 348–394 (SDIFSLLPTHLTLYVFSYLEPKELLILAQVSSQWQKLAGDNLLWVRF) is the F-box domain. The region spanning 464–571 (SSSKEGWLYK…WMILLNSIIK (108 aa)) is the PH domain. Low complexity-rich tracts occupy residues 594 to 622 (NNVY…NNNN) and 629 to 648 (LPPL…SSTG). A disordered region spans residues 594–680 (NNVYINNNNN…GGGSGGNNNF (87 aa)). The Rho-GAP domain occupies 701–885 (VALSKILENQ…KYYDEIFIKK (185 aa)).

Its subcellular location is the cytoplasm. In terms of biological role, rho GTPase-activating protein involved in the signal transduction pathway. The polypeptide is Rho GTPase-activating protein gacFF (gacFF) (Dictyostelium discoideum (Social amoeba)).